The chain runs to 62 residues: Temporin-1PLa (62 aa).

Positions 1–22 are cleaved as a signal peptide; sequence MFTSKKSLLLLFFLGTINLSLC. Residues 23-45 constitute a propeptide that is removed on maturation; that stretch reads EEERDADEEERRDDPDEMNVEVE. Ile60 carries the isoleucine amide modification.

Expressed by the skin glands.

It is found in the secreted. Antimicrobial activity against the Gram-positive bacterium S.aureus. The polypeptide is Temporin-1PLa (Lithobates palustris (Pickerel frog)).